A 466-amino-acid chain; its full sequence is Argininosuccinate lyase (466 aa).

This sequence belongs to the lyase 1 family. Argininosuccinate lyase subfamily.

It is found in the cytoplasm. The enzyme catalyses 2-(N(omega)-L-arginino)succinate = fumarate + L-arginine. The protein operates within amino-acid biosynthesis; L-arginine biosynthesis; L-arginine from L-ornithine and carbamoyl phosphate: step 3/3. This is Argininosuccinate lyase from Ehrlichia ruminantium (strain Gardel).